The primary structure comprises 352 residues: Glutamine synthetase (352 aa).

One can recognise a GS beta-grasp domain in the interval 3 to 82; it reads YQAEYIWIDG…LCEVQLTDFT (80 aa). The region spanning 87–352 is the GS catalytic domain; the sequence is TRAAALGVAE…TTPAPAEASV (266 aa). Residues glutamate 108 and glutamate 110 each coordinate Mg(2+). Residue glutamate 164 coordinates ATP. 2 residues coordinate Mg(2+): glutamate 169 and glutamate 176. An L-glutamate-binding site is contributed by glutamate 272.

Belongs to the glutamine synthetase family. In terms of assembly, homooctamer and homotetramer. The cofactor is Mg(2+).

The protein resides in the cytoplasm. The enzyme catalyses L-glutamate + NH4(+) + ATP = L-glutamine + ADP + phosphate + H(+). Functionally, catalyzes the ATP-dependent biosynthesis of glutamine from glutamate and ammonia. In Frankia alni, this protein is Glutamine synthetase.